The following is a 90-amino-acid chain: UPF0213 protein Reut_B5558 (90 aa).

Positions 5–80 (RQWYLYLLEC…KRMSSAQKIA (76 aa)) constitute a GIY-YIG domain.

Belongs to the UPF0213 family.

The protein is UPF0213 protein Reut_B5558 of Cupriavidus pinatubonensis (strain JMP 134 / LMG 1197) (Cupriavidus necator (strain JMP 134)).